The chain runs to 640 residues: DNA mismatch repair protein MutL (640 aa).

2 disordered regions span residues 332–353 (PNVQVEEKPDSPRPTGESFNFP) and 408–431 (PAHTEASLTPPKQAEPEGNPTFHD).

Belongs to the DNA mismatch repair MutL/HexB family.

Its function is as follows. This protein is involved in the repair of mismatches in DNA. It is required for dam-dependent methyl-directed DNA mismatch repair. May act as a 'molecular matchmaker', a protein that promotes the formation of a stable complex between two or more DNA-binding proteins in an ATP-dependent manner without itself being part of a final effector complex. This Chloroherpeton thalassium (strain ATCC 35110 / GB-78) protein is DNA mismatch repair protein MutL.